The sequence spans 297 residues: Small ribosomal subunit protein uS2 (297 aa).

The interval 276-297 (DWASSAPAEGWAGEAPATEAKW) is disordered.

The protein belongs to the universal ribosomal protein uS2 family. Component of the small ribosomal subunit. Mature ribosomes consist of a small (40S) and a large (60S) subunit. The 40S subunit contains about 33 different proteins and 1 molecule of RNA (18S). The 60S subunit contains about 49 different proteins and 3 molecules of RNA (25S, 5.8S and 5S). Interacts with RPS21.

It is found in the cytoplasm. In terms of biological role, required for the assembly and/or stability of the 40S ribosomal subunit. Required for the processing of the 20S rRNA-precursor to mature 18S rRNA in a late step of the maturation of 40S ribosomal subunits. The chain is Small ribosomal subunit protein uS2 from Uncinocarpus reesii (strain UAMH 1704).